The sequence spans 287 residues: Large ribosomal subunit protein uL2 (287 aa).

Positions 221–287 (RGSVMNPCDH…SKRSRGGRDS (67 aa)) are disordered. Residues 271–287 (LRKRRKTSKRSRGGRDS) are compositionally biased toward basic residues.

It belongs to the universal ribosomal protein uL2 family. Part of the 50S ribosomal subunit. Forms a bridge to the 30S subunit in the 70S ribosome.

One of the primary rRNA binding proteins. Required for association of the 30S and 50S subunits to form the 70S ribosome, for tRNA binding and peptide bond formation. It has been suggested to have peptidyltransferase activity; this is somewhat controversial. Makes several contacts with the 16S rRNA in the 70S ribosome. In Synechococcus sp. (strain CC9902), this protein is Large ribosomal subunit protein uL2.